We begin with the raw amino-acid sequence, 330 residues long: MASINLIKSLKLYKEKIWSFDFSQGILATGSTDRKIKLVSVKDDDFTLIDVLDETAHKKAIRSVAWRPHTSLLAAGSFDSTVSIWAKEESADRTFEMDLLAIIEGHENEVKGVAWSNDGYYLATCSRDKSVWIWETDESGEEYECISVLQEHSQDVKHVIWHPSEALLASSSYDDTVRIWKDYDDDWECVAVLNGHEGTVWSSDFDKTEGVFRLCSGSDDSTVRVWKYMGDDEDDQQEWVCEAILPDVHKRQVYNVAWGFNGLIASVGADGVLAVYEEVDGEWKVFAKRALCHGVYEINVVKWLELNGKTILATGGDDGIVNFWSLEKAA.

WD repeat units follow at residues 12–49 (LYKE…FTLI), 56–95 (AHKK…DRTF), 105–144 (GHEN…EEYE), 151–190 (EHSQ…WECV), 195–236 (GHEG…EDDQ), 248–286 (VHKR…WKVF), and 292–330 (CHGV…EKAA).

Belongs to the WD repeat CIA1 family. As to quaternary structure, interacts with NAR1.

It is found in the cytoplasm. Its subcellular location is the nucleus. Functionally, essential component of the cytosolic iron-sulfur (Fe/S) protein assembly machinery. Required for the maturation of extramitochondrial Fe/S proteins. The sequence is that of Probable cytosolic iron-sulfur protein assembly protein 1 from Saccharomyces cerevisiae (strain YJM789) (Baker's yeast).